We begin with the raw amino-acid sequence, 341 residues long: MSKPNNSTAPLPFPILIGDIGGTNARFSILTDAYAEPKQFPNVRTADFATIDEAIQQGVLDKTAVQPRSAILAVAGPINDDEIPLTNCDWVVRPKTMIEGLGMEDVLVVNDFEAQALAIAALSDENRERIGDATRDMIASRVVLGPGTGLGVGGLVHAQHSWIPVPGEGGHVDLGPRSKRDYDIFPHIETIEGRVSAEQILCGRGLVNLYHAICVVDGIEPTMKDPADITSHALAGSDKAAVETVSLFATYLGRVAGDLAMVFMARGGVYLSGGISQKIIPALKKPEFRIAFEDKAPHTALLRTIPTYVVTHPLAALAGLSSYARMPANFGVSTEGRRWRR.

18 to 23 (GDIGGT) provides a ligand contact to ATP.

It belongs to the bacterial glucokinase family.

It is found in the cytoplasm. It carries out the reaction D-glucose + ATP = D-glucose 6-phosphate + ADP + H(+). The sequence is that of Glucokinase from Rhizobium johnstonii (strain DSM 114642 / LMG 32736 / 3841) (Rhizobium leguminosarum bv. viciae).